The primary structure comprises 432 residues: Ribulose bisphosphate carboxylase-like protein 2 (432 aa).

3 residues coordinate Mg(2+): Lys-198, Asp-200, and Glu-201. An N6-carboxylysine modification is found at Lys-198.

The protein belongs to the RuBisCO large chain family. Type IV subfamily. Homodimer. Mg(2+) is required as a cofactor.

In terms of biological role, may be involved in sulfur metabolism and oxidative stress response. Does not show RuBisCO activity. The protein is Ribulose bisphosphate carboxylase-like protein 2 (rlp2) of Rhodopseudomonas palustris (strain ATCC BAA-98 / CGA009).